The following is a 942-amino-acid chain: Protein FAM184B (942 aa).

2 disordered regions span residues 1–26 (MASALNSKIHPPGTCASSKADARGGS) and 73–97 (QEDLQDTGAETRTRLPQEQSRTSED). Coiled-coil stretches lie at residues 89–150 (QEQS…RVLI), 196–337 (EMHQ…DRLM), and 387–495 (SETQ…SLLE). The interval 486–542 (STKLQNSLLEDPCSRPKKPARDEGLEKLTDEEESSSDEEERTGESVKGKSDLQPPFE) is disordered. Basic and acidic residues predominate over residues 504-513 (PARDEGLEKL). Positions 514 to 526 (TDEEESSSDEEER) are enriched in acidic residues. Coiled coils occupy residues 575 to 619 (NKDS…ESLR) and 686 to 815 (EKGL…ERRF). Residues 880–934 (APPITKSPSLDPSPSCSQPYKPTQLLDGKTASRTQDGEPAQPKEAPQKQGSPHQE) are disordered. A compositionally biased stretch (polar residues) spans 885 to 900 (KSPSLDPSPSCSQPYK).

This sequence belongs to the FAM184 family.

The sequence is that of Protein FAM184B (Fam184b) from Mus musculus (Mouse).